A 214-amino-acid polypeptide reads, in one-letter code: pH-sensitive calcium channel (214 aa).

Topologically, residues 1-15 are cytoplasmic; sequence MQATVHESKQSIMQR. A helical membrane pass occupies residues 16–37; the sequence is ILTVFVFTLLIATVGLFIGQFV. The Extracellular portion of the chain corresponds to 38 to 44; sequence PVALMLP. Residues 45–59 traverse the membrane as a helical segment; sequence LSILEVAMIILAFWM. Over 60 to 66 the chain is Cytoplasmic; that stretch reads RRRKAVG. The helical transmembrane segment at 67 to 86 threads the bilayer; the sequence is YAFVYTFAFVSGITLFPIVS. Over 87 to 95 the chain is Extracellular; sequence HYASIAGAY. The helical transmembrane segment at 96 to 117 threads the bilayer; it reads VVLEAFGSTFVIFAVLGTIGAK. The Cytoplasmic portion of the chain corresponds to 118-122; it reads MKKDL. A helical transmembrane segment spans residues 123–146; it reads SFLWSFLLVAVLALAVVGIFNIFS. The Extracellular portion of the chain corresponds to 147 to 151; the sequence is PLNSA. A helical membrane pass occupies residues 152–175; it reads AMMAYSVIGTIVFSLYILYDLNQI. At 176-185 the chain is on the cytoplasmic side; that stretch reads KHRHITEDLI. The helical transmembrane segment at 186-207 threads the bilayer; the sequence is PVMALSLYLDFINLFINLLRFF. Over 208–214 the chain is Extracellular; the sequence is GILSSDD.

Belongs to the BI1 family. In terms of assembly, monomer.

Its subcellular location is the cell membrane. The catalysed reaction is Ca(2+)(in) = Ca(2+)(out). Its activity is regulated as follows. The calcium-release activity is mediated by two factors: pH and transmembrane ion gradient. It was proposed, based on an MD simulation, that the conserved aspartyl dyad (Asp-171-Asp-195) regulates Ca(2+) binding, pH sensing, and the channel pore opening and closing, and that protonation of Asp-171 probably weakens its interaction with Arg-60, facilitating the opening of the channel. Another study using nanodiscs suggests that Asp-171 is not a pH sensor regulating the pore dynamics; instead, it is only involved in the gating of calcium ions. When crystallized in detergents at different pH conditions, the transition between open and closed conformations is regulated by pH. Ca(2+) binding is inhibited by Na(+), K(+), Li(+), Yb(3+) and Lu(3+), but not by Mg(2+) and Mn(2+). Functionally, calcium channel that probably plays a role in the regulation of calcium homeostasis. Uptakes calcium ions and mediates calcium flux in proteoliposomes in a pH-dependent manner. When expressed in E.coli in the presence of high extracellular calcium concentrations, shows calcium-leak activity, increasing intracellular calcium concentration. It can also mediate Ca(2+) flux from the endoplamic reticulum (ER) when expressed in permeabilized mammalian cells. Calcium transport activity is also detected in ER-like lipid vesicles. This is pH-sensitive calcium channel from Bacillus subtilis (strain 168).